Consider the following 205-residue polypeptide: GTP cyclohydrolase-2 (205 aa).

49-53 (RLHSE) is a binding site for GTP. Positions 54, 65, and 67 each coordinate Zn(2+). GTP is bound by residues Q70, 92-94 (EGR), and T114. D126 acts as the Proton acceptor in catalysis. Residue R128 is the Nucleophile of the active site. GTP contacts are provided by T149 and K154.

The protein belongs to the GTP cyclohydrolase II family. It depends on Zn(2+) as a cofactor.

The enzyme catalyses GTP + 4 H2O = 2,5-diamino-6-hydroxy-4-(5-phosphoribosylamino)-pyrimidine + formate + 2 phosphate + 3 H(+). It participates in cofactor biosynthesis; riboflavin biosynthesis; 5-amino-6-(D-ribitylamino)uracil from GTP: step 1/4. In terms of biological role, catalyzes the conversion of GTP to 2,5-diamino-6-ribosylamino-4(3H)-pyrimidinone 5'-phosphate (DARP), formate and pyrophosphate. The chain is GTP cyclohydrolase-2 from Pseudomonas putida (strain W619).